A 61-amino-acid chain; its full sequence is Small ribosomal subunit protein uS14 (61 aa).

The Zn(2+) site is built by Cys24, Cys27, Cys40, and Cys43.

This sequence belongs to the universal ribosomal protein uS14 family. Zinc-binding uS14 subfamily. As to quaternary structure, part of the 30S ribosomal subunit. Contacts proteins S3 and S10. Requires Zn(2+) as cofactor.

Its function is as follows. Binds 16S rRNA, required for the assembly of 30S particles and may also be responsible for determining the conformation of the 16S rRNA at the A site. The protein is Small ribosomal subunit protein uS14 of Campylobacter jejuni subsp. jejuni serotype O:6 (strain 81116 / NCTC 11828).